Here is a 272-residue protein sequence, read N- to C-terminus: Putative phosphoenolpyruvate synthase regulatory protein (272 aa).

152–159 (GVSRCGKT) is a binding site for ADP.

This sequence belongs to the pyruvate, phosphate/water dikinase regulatory protein family. PSRP subfamily.

It carries out the reaction [pyruvate, water dikinase] + ADP = [pyruvate, water dikinase]-phosphate + AMP + H(+). The catalysed reaction is [pyruvate, water dikinase]-phosphate + phosphate + H(+) = [pyruvate, water dikinase] + diphosphate. Bifunctional serine/threonine kinase and phosphorylase involved in the regulation of the phosphoenolpyruvate synthase (PEPS) by catalyzing its phosphorylation/dephosphorylation. This chain is Putative phosphoenolpyruvate synthase regulatory protein, found in Stutzerimonas stutzeri (strain A1501) (Pseudomonas stutzeri).